Consider the following 449-residue polypeptide: Phosphoglucosamine mutase (449 aa).

The active-site Phosphoserine intermediate is the Ser-101. Residues Ser-101, Asp-243, Asp-245, and Asp-247 each coordinate Mg(2+). Ser-101 carries the post-translational modification Phosphoserine.

It belongs to the phosphohexose mutase family. Requires Mg(2+) as cofactor. Post-translationally, activated by phosphorylation.

It carries out the reaction alpha-D-glucosamine 1-phosphate = D-glucosamine 6-phosphate. Catalyzes the conversion of glucosamine-6-phosphate to glucosamine-1-phosphate. The sequence is that of Phosphoglucosamine mutase from Syntrophobacter fumaroxidans (strain DSM 10017 / MPOB).